Here is a 1101-residue protein sequence, read N- to C-terminus: Protein diaphanous homolog 2 (1101 aa).

At methionine 1 the chain carries N-acetylmethionine. Residues 1–44 (MEQPGAAASGAGGGSEEPGGGRSNKRSAGNRAANEEETKNKPKL) form a disordered region. Over residues 10-22 (GAGGGSEEPGGGR) the composition is skewed to gly residues. The GBD/FH3 domain maps to 98 to 464 (SLNLSEKEVL…QIVLHCSGMD (367 aa)). 2 coiled-coil regions span residues 366–418 (KEKE…MLKD) and 487–547 (KAKV…SSSG). The segment covering 536 to 546 (RTQAQVLSSSS) has biased composition (polar residues). Disordered stretches follow at residues 536–594 (RTQA…PPPP), 1010–1048 (NKRR…DINK), and 1070–1101 (RDRR…ISSK). The span at 549–594 (PGPPAAPPLPGVGPPPPPPAPPLPGGAPLPPPPPPLPGMMGIPPPP) shows a compositional bias: pro residues. In terms of domain architecture, FH1 spans 549–623 (PGPPAAPPLP…PPPGISLNLP (75 aa)). Residues 628 to 1028 (QKKMYKPEVS…TRRAKLAKEK (401 aa)) form the FH2 domain. The stretch at 903 to 1053 (SASKVSAQIL…IDINKEGDET (151 aa)) forms a coiled coil. Composition is skewed to basic and acidic residues over residues 1010–1035 (NKRR…EKLE) and 1078–1090 (RNPD…LERS). In terms of domain architecture, DAD spans 1051 to 1081 (DETGVMDNLLEALQSGAAFRDRRKRIPRNPD).

It belongs to the formin homology family. Diaphanous subfamily. In terms of assembly, isoform 3 interacts with RHOD in the GTP-bound form. As to expression, expressed in testis, ovary, small intestine, prostate, lung, liver, kidney and leukocytes.

Its subcellular location is the cytoplasm. The protein resides in the cytosol. The protein localises to the early endosome. Functionally, could be involved in oogenesis. Involved in the regulation of endosome dynamics. Implicated in a novel signal transduction pathway, in which isoform 3 and CSK are sequentially activated by RHOD to regulate the motility of early endosomes through interactions with the actin cytoskeleton. The chain is Protein diaphanous homolog 2 (DIAPH2) from Homo sapiens (Human).